Consider the following 58-residue polypeptide: Large ribosomal subunit protein uL30 (58 aa).

It belongs to the universal ribosomal protein uL30 family. In terms of assembly, part of the 50S ribosomal subunit.

This chain is Large ribosomal subunit protein uL30, found in Pseudomonas putida (strain ATCC 700007 / DSM 6899 / JCM 31910 / BCRC 17059 / LMG 24140 / F1).